The primary structure comprises 491 residues: MVYRNRSKSVLSTHSKKSDDKAHYKSRSKKKSKSRSKKRLRIYWRYISIVWILWLGLISYYESVVVKRAMKKCQWSTWEDWPEGAESHRVGLFADPQIMDEYSYPGRPQIVNYFTRVIVDHYHRRNWKYVQYYLDPDSNFFLGDLFDGGRNWDDKQWIKEYTRFNQIFPKKPLRRTVMSLPGNHDIGFGDTVVESSLQRFSSYFGETSSSLDAGNHTFVLLDTISLSDKTNPNVSRVPRQFLDNFAMGSHPLPRILLTHVPLWRDPEQQTCGQLRESKEPFPIQKGHQYQTVIENDISQEILTKIQPEILFSGDDHDHCQISHSYPFQGKTKNAQEITVKSCAMNMGISRPAIQLLSLYNPSDLTMVNAGGEYASKTYQTELCYMPDPYKAIRMYLWGLLFSAAFIAYMHFFPKSFNNRVATIMNRVFTRPDGNTSDLPLPTSISKSKSKKSLTHSKYAVNDTRSIKQFLVNAIVLFVSVMPIFIYFYTVV.

Residues 1 to 33 are disordered; the sequence is MVYRNRSKSVLSTHSKKSDDKAHYKSRSKKKSK. Residues 1–39 lie on the Cytoplasmic side of the membrane; sequence MVYRNRSKSVLSTHSKKSDDKAHYKSRSKKKSKSRSKKR. Over residues 24-33 the composition is skewed to basic residues; that stretch reads YKSRSKKKSK. Residues 40–60 traverse the membrane as a helical segment; the sequence is LRIYWRYISIVWILWLGLISY. The Extracellular segment spans residues 61-391; it reads YESVVVKRAM…LCYMPDPYKA (331 aa). Positions 95, 144, 183, and 323 each coordinate a divalent metal cation. The chain crosses the membrane as a helical span at residues 392 to 412; the sequence is IRMYLWGLLFSAAFIAYMHFF. Topologically, residues 413-465 are cytoplasmic; it reads PKSFNNRVATIMNRVFTRPDGNTSDLPLPTSISKSKSKKSLTHSKYAVNDTRS. A helical transmembrane segment spans residues 466–486; sequence IKQFLVNAIVLFVSVMPIFIY. The Extracellular portion of the chain corresponds to 487-491; that stretch reads FYTVV.

It belongs to the metallophosphoesterase superfamily. MPPE1 family. A divalent metal cation is required as a cofactor.

The protein localises to the membrane. Functionally, probable metallophosphoesterase which may participate in recombinational repair of double -strand breaks. The polypeptide is Cell division control protein 1 (CDC1) (Saccharomyces cerevisiae (strain ATCC 204508 / S288c) (Baker's yeast)).